A 213-amino-acid chain; its full sequence is ATP phosphoribosyltransferase (213 aa).

The protein belongs to the ATP phosphoribosyltransferase family. Short subfamily. In terms of assembly, heteromultimer composed of HisG and HisZ subunits.

Its subcellular location is the cytoplasm. It catalyses the reaction 1-(5-phospho-beta-D-ribosyl)-ATP + diphosphate = 5-phospho-alpha-D-ribose 1-diphosphate + ATP. The protein operates within amino-acid biosynthesis; L-histidine biosynthesis; L-histidine from 5-phospho-alpha-D-ribose 1-diphosphate: step 1/9. Its function is as follows. Catalyzes the condensation of ATP and 5-phosphoribose 1-diphosphate to form N'-(5'-phosphoribosyl)-ATP (PR-ATP). Has a crucial role in the pathway because the rate of histidine biosynthesis seems to be controlled primarily by regulation of HisG enzymatic activity. This Teredinibacter turnerae (strain ATCC 39867 / T7901) protein is ATP phosphoribosyltransferase.